We begin with the raw amino-acid sequence, 365 residues long: Caffeic acid 3-O-methyltransferase (365 aa).

Residue asparagine 131 participates in (E)-ferulate binding. Glycine 208, aspartate 231, aspartate 251, methionine 252, methionine 264, and lysine 265 together coordinate S-adenosyl-L-homocysteine. Histidine 269 (proton acceptor) is an active-site residue. Residue aspartate 270 participates in (E)-5-hydroxyferulate binding. Residues glutamate 297 and glutamate 329 contribute to the active site.

Belongs to the class I-like SAM-binding methyltransferase superfamily. Cation-independent O-methyltransferase family. COMT subfamily. Homodimer. As to expression, more abundant in roots and stems.

It catalyses the reaction (E)-caffeate + S-adenosyl-L-methionine = (E)-ferulate + S-adenosyl-L-homocysteine + H(+). The catalysed reaction is (E)-5-hydroxyferulate + S-adenosyl-L-methionine = (E)-sinapate + S-adenosyl-L-homocysteine + H(+). It functions in the pathway aromatic compound metabolism; phenylpropanoid biosynthesis. Catalyzes the conversion of caffeic acid to ferulic acid and of 5-hydroxyferulic acid to sinapic acid. The resulting products may subsequently be converted to the corresponding alcohols that are incorporated into lignins. This Medicago sativa (Alfalfa) protein is Caffeic acid 3-O-methyltransferase.